The sequence spans 394 residues: Elongation factor Tu 2 (394 aa).

In terms of domain architecture, tr-type G spans 10-204 (KPHVNVGTIG…YLDSYIPEPE (195 aa)). The G1 stretch occupies residues 19–26 (GHVDHGKT). 19–26 (GHVDHGKT) serves as a coordination point for GTP. T26 provides a ligand contact to Mg(2+). The tract at residues 60–64 (GITIN) is G2. Residues 81-84 (DCPG) form a G3 region. GTP-binding positions include 81–85 (DCPGH) and 136–139 (NKCD). The tract at residues 136-139 (NKCD) is G4. A G5 region spans residues 174-176 (SAL).

The protein belongs to the TRAFAC class translation factor GTPase superfamily. Classic translation factor GTPase family. EF-Tu/EF-1A subfamily. As to quaternary structure, monomer.

The protein resides in the cytoplasm. It catalyses the reaction GTP + H2O = GDP + phosphate + H(+). GTP hydrolase that promotes the GTP-dependent binding of aminoacyl-tRNA to the A-site of ribosomes during protein biosynthesis. This chain is Elongation factor Tu 2, found in Yersinia pseudotuberculosis serotype O:1b (strain IP 31758).